Here is a 425-residue protein sequence, read N- to C-terminus: Glucose-1-phosphate adenylyltransferase (425 aa).

Residues Tyr-114, Gly-179, 194 to 195 (EK), and Ser-212 contribute to the alpha-D-glucose 1-phosphate site.

This sequence belongs to the bacterial/plant glucose-1-phosphate adenylyltransferase family. As to quaternary structure, homotetramer.

The enzyme catalyses alpha-D-glucose 1-phosphate + ATP + H(+) = ADP-alpha-D-glucose + diphosphate. It functions in the pathway glycan biosynthesis; glycogen biosynthesis. In terms of biological role, involved in the biosynthesis of ADP-glucose, a building block required for the elongation reactions to produce glycogen. Catalyzes the reaction between ATP and alpha-D-glucose 1-phosphate (G1P) to produce pyrophosphate and ADP-Glc. The chain is Glucose-1-phosphate adenylyltransferase from Pectobacterium carotovorum subsp. carotovorum (strain PC1).